The following is a 70-amino-acid chain: Neuropeptide SIFamide (70 aa).

The N-terminal stretch at 1 to 22 (MRFIVALCLFAIVMCIIHKAEG) is a signal peptide. Position 34 is a phenylalanine amide (F34). Positions 38–70 (GVVEYDTTGRALSALCEIASETCQAWYQTLENK) are excised as a propeptide.

In terms of tissue distribution, expressed in antennal lobe (AL) and gnathal ganglion (GNG) with expression detected in most animals (at protein level). Not expressed in corpora cardiaca (CC) and corpora allata (CA) (at protein level).

It localises to the secreted. In terms of biological role, ligand for the neuropeptide SIFamide receptor. The protein is Neuropeptide SIFamide of Agrotis ipsilon (Black cutworm moth).